A 214-amino-acid chain; its full sequence is Thiamine pyrophosphokinase (214 aa).

Belongs to the thiamine pyrophosphokinase family.

It catalyses the reaction thiamine + ATP = thiamine diphosphate + AMP + H(+). It participates in cofactor biosynthesis; thiamine diphosphate biosynthesis; thiamine diphosphate from thiamine: step 1/1. In terms of biological role, catalyzes the ATP-dependent phosphorylation of thiamine to thiamine pyrophosphate. Is involved in thiamine salvage. This is Thiamine pyrophosphokinase from Bacillus subtilis (strain 168).